The chain runs to 339 residues: MADLKPYIAKAASGEPLPLGDAKAAFDIMMSGQATPSQIGGFLMALRVRGETVPEIAGAVASMRSRMIPVIAPDDAMDIVGTGGDQSGSYNVSSCTAFVVAGAGVPVAKHGNRALSSRSGAADALAALGINIEADADTIGRSISEAGLGFMFAPMHHSAMRHVGPSRVELGTRTIFNLLGPLSNPASVKRQLVGVFAPQWLEPLAHVLKELGSETAWVVYGDGLDEMTTAGTTQVAALENGQIRTFEITPEEVGLRRCSPAELKGGEAAENAKALLGVLEGKDSAYRDIVLLNSGAALVVAGKAENLKDGIAQAVQSIDSGAALAVLQKVIAVSNDKPA.

5-phospho-alpha-D-ribose 1-diphosphate contacts are provided by residues Gly-81, 84-85 (GD), Ser-89, 91-94 (NVSS), 109-117 (KHGNRALSS), and Ala-121. Gly-81 is a binding site for anthranilate. Mg(2+) is bound at residue Ser-93. Anthranilate is bound at residue Asn-112. Anthranilate is bound at residue Arg-167. Asp-225 and Glu-226 together coordinate Mg(2+).

The protein belongs to the anthranilate phosphoribosyltransferase family. In terms of assembly, homodimer. Mg(2+) serves as cofactor.

The enzyme catalyses N-(5-phospho-beta-D-ribosyl)anthranilate + diphosphate = 5-phospho-alpha-D-ribose 1-diphosphate + anthranilate. It participates in amino-acid biosynthesis; L-tryptophan biosynthesis; L-tryptophan from chorismate: step 2/5. Its function is as follows. Catalyzes the transfer of the phosphoribosyl group of 5-phosphorylribose-1-pyrophosphate (PRPP) to anthranilate to yield N-(5'-phosphoribosyl)-anthranilate (PRA). In Brucella abortus (strain S19), this protein is Anthranilate phosphoribosyltransferase.